The primary structure comprises 268 residues: Ribonuclease P protein subunit p30 (268 aa).

A2 bears the N-acetylalanine mark. S251 is subject to Phosphoserine.

The protein belongs to the eukaryotic/archaeal RNase P protein component 3 family. As to quaternary structure, component of nuclear RNase P and RNase MRP ribonucleoproteins. RNase P consists of a catalytic RNA moiety and about 10 protein subunits; POP1, POP4, POP5, POP7, RPP14, RPP21, RPP25, RPP30, RPP38 and RPP40. Within the RNase P complex, POP1, POP7 and RPP25 form the 'finger' subcomplex, POP5, RPP14, RPP40 and homodimeric RPP30 form the 'palm' subcomplex, and RPP21, POP4 and RPP38 form the 'wrist' subcomplex. All subunits of the RNase P complex interact with the catalytic RNA. Several subunits of RNase P are also part of the RNase MRP complex. RNase MRP consists of a catalytic RNA moiety and about 8 protein subunits; POP1, POP7, RPP25, RPP30, RPP38, RPP40 and possibly also POP4 and POP5.

Its subcellular location is the nucleus. The protein localises to the nucleolus. Its function is as follows. Component of ribonuclease P, a ribonucleoprotein complex that generates mature tRNA molecules by cleaving their 5'-ends. Also a component of the MRP ribonuclease complex, which cleaves pre-rRNA sequences. In Mus musculus (Mouse), this protein is Ribonuclease P protein subunit p30 (Rpp30).